Reading from the N-terminus, the 370-residue chain is Mitochondrial distribution and morphology protein 10 (370 aa).

Belongs to the MDM10 family. Component of the ER-mitochondria encounter structure (ERMES) or MDM complex, composed of mmm1, mdm10, mdm12 and mdm34. Associates with the mitochondrial outer membrane sorting assembly machinery SAM(core) complex.

Its subcellular location is the mitochondrion outer membrane. Component of the ERMES/MDM complex, which serves as a molecular tether to connect the endoplasmic reticulum and mitochondria. Components of this complex are involved in the control of mitochondrial shape and protein biogenesis and may function in phospholipid exchange. mdm10 is involved in the late assembly steps of the general translocase of the mitochondrial outer membrane (TOM complex). Functions in the tom40-specific route of the assembly of outer membrane beta-barrel proteins, including the association of tom40 with the receptor tom22 and small TOM proteins. Can associate with the SAM(core) complex as well as the mdm12-mmm1 complex, both involved in late steps of the major beta-barrel assembly pathway, that is responsible for biogenesis of all outer membrane beta-barrel proteins. May act as a switch that shuttles between both complexes and channels precursor proteins into the tom40-specific pathway. Plays a role in mitochondrial morphology and in the inheritance of mitochondria. The sequence is that of Mitochondrial distribution and morphology protein 10 (mdm10) from Schizosaccharomyces pombe (strain 972 / ATCC 24843) (Fission yeast).